The chain runs to 470 residues: 3-isopropylmalate dehydratase large subunit (470 aa).

[4Fe-4S] cluster is bound by residues Cys351, Cys411, and Cys414.

This sequence belongs to the aconitase/IPM isomerase family. LeuC type 1 subfamily. In terms of assembly, heterodimer of LeuC and LeuD. [4Fe-4S] cluster is required as a cofactor.

The catalysed reaction is (2R,3S)-3-isopropylmalate = (2S)-2-isopropylmalate. It participates in amino-acid biosynthesis; L-leucine biosynthesis; L-leucine from 3-methyl-2-oxobutanoate: step 2/4. Catalyzes the isomerization between 2-isopropylmalate and 3-isopropylmalate, via the formation of 2-isopropylmaleate. The protein is 3-isopropylmalate dehydratase large subunit of Rhodopseudomonas palustris (strain BisB5).